The sequence spans 424 residues: UDP-N-acetylglucosamine 1-carboxyvinyltransferase (424 aa).

Residue 22-23 (KN) coordinates phosphoenolpyruvate. Position 95 (R95) interacts with UDP-N-acetyl-alpha-D-glucosamine. Catalysis depends on C119, which acts as the Proton donor. At C119 the chain carries 2-(S-cysteinyl)pyruvic acid O-phosphothioketal. UDP-N-acetyl-alpha-D-glucosamine is bound by residues 124–128 (RPVDQ), D311, and I333.

The protein belongs to the EPSP synthase family. MurA subfamily.

It localises to the cytoplasm. The catalysed reaction is phosphoenolpyruvate + UDP-N-acetyl-alpha-D-glucosamine = UDP-N-acetyl-3-O-(1-carboxyvinyl)-alpha-D-glucosamine + phosphate. It participates in cell wall biogenesis; peptidoglycan biosynthesis. Its function is as follows. Cell wall formation. Adds enolpyruvyl to UDP-N-acetylglucosamine. The polypeptide is UDP-N-acetylglucosamine 1-carboxyvinyltransferase (Polaromonas sp. (strain JS666 / ATCC BAA-500)).